A 252-amino-acid polypeptide reads, in one-letter code: tRNA (guanine-N(1)-)-methyltransferase (252 aa).

Residues glycine 118 and 138 to 143 (IGDYVL) each bind S-adenosyl-L-methionine.

Belongs to the RNA methyltransferase TrmD family. Homodimer.

It localises to the cytoplasm. It carries out the reaction guanosine(37) in tRNA + S-adenosyl-L-methionine = N(1)-methylguanosine(37) in tRNA + S-adenosyl-L-homocysteine + H(+). Functionally, specifically methylates guanosine-37 in various tRNAs. The polypeptide is tRNA (guanine-N(1)-)-methyltransferase (Pseudomonas paraeruginosa (strain DSM 24068 / PA7) (Pseudomonas aeruginosa (strain PA7))).